The sequence spans 70 residues: MKLTCVLIIAVLFLTACQLTTGEQKDHALRSTDKNSKLTRQCTPVGGYCSRHYHCCSNHCIKSIGRCVAH.

Positions 1–22 are cleaved as a signal peptide; sequence MKLTCVLIIAVLFLTACQLTTG. The propeptide occupies 23–40; sequence EQKDHALRSTDKNSKLTR. Pyrrolidone carboxylic acid is present on Gln41. Cystine bridges form between Cys42-Cys56, Cys49-Cys60, and Cys55-Cys67.

It belongs to the conotoxin O1 superfamily. In terms of tissue distribution, expressed by the venom duct.

Its subcellular location is the secreted. The protein is Conotoxin ArMKLT2-0112 of Conus arenatus (Sand-dusted cone).